A 78-amino-acid polypeptide reads, in one-letter code: Putative antitoxin VapB4 (78 aa).

It belongs to the UPF0330 family.

Possibly the antitoxin component of a type II toxin-antitoxin (TA) system. Its cognate toxin is VapC4 (Potential). In Pyrococcus furiosus (strain ATCC 43587 / DSM 3638 / JCM 8422 / Vc1), this protein is Putative antitoxin VapB4 (vapB4).